The primary structure comprises 121 residues: Natriuretic peptides B (121 aa).

The signal sequence occupies residues 1-26; the sequence is MDLQKVLPQMILLLLFLNLSPLGGHS. The cysteines at positions 99 and 115 are disulfide-linked.

Belongs to the natriuretic peptide family. Post-translationally, the precursor molecule is proteolytically cleaved by the endoprotease Furin to produce brain natriuretic peptide 45. May undergo further proteolytic cleavage by various proteases such as DPP4, MME and possibly FAP, to give rise to a variety of shorter peptides. May be cleaved at Ser-91 by the prolyl endopeptidase FAP (seprase) activity (in vitro). May be degraded by IDE. During IDE degradation, the resulting products initially increase the activation of NPR1 and can also stimulate NPR2 to produce cGMP before the fragments are completely degraded and inactivated by IDE (in vitro). Expressed in the atria and ventricles, but at much lower levels than NPPA. Expression levels in the ventricles are slightly higher than in the atria. Very low levels of expression detected in the brain, hypothalamus, lung and aorta. As to expression, atria (at protein level). Cardiocytes (at protein level).

The protein localises to the secreted. In terms of biological role, cardiac hormone that plays a key role in mediating cardio-renal homeostasis. May also function as a paracrine antifibrotic factor in the heart. Acts by specifically binding and stimulating NPR1 to produce cGMP, which in turn activates effector proteins that drive various biological responses. Likely involved in regulating the extracellular fluid volume and maintaining the fluid-electrolyte balance through natriuresis, diuresis, kaluresis and chloruresis. The polypeptide is Natriuretic peptides B (Nppb) (Rattus norvegicus (Rat)).